Consider the following 172-residue polypeptide: Small ribosomal subunit protein bS16 (172 aa).

The disordered stretch occupies residues 125–172; that stretch reads KKRKAKEEAEAKAAAEKAAEEAAAAEAAKAEEEAAKAEEADSAEESAE. Composition is skewed to basic and acidic residues over residues 129-144 and 152-163; these read AKEE…KAAE and AKAEEEAAKAEE.

Belongs to the bacterial ribosomal protein bS16 family.

The polypeptide is Small ribosomal subunit protein bS16 (Corynebacterium aurimucosum (strain ATCC 700975 / DSM 44827 / CIP 107346 / CN-1) (Corynebacterium nigricans)).